The chain runs to 305 residues: NADH-cytochrome b5 reductase 1 (305 aa).

The chain crosses the membrane as a helical span at residues 8 to 28 (VLLASLGVGLVTLLGLAVGSY). Residues 44–156 (NEKYLLRLLD…RGPSGLLTYT (113 aa)) form the FAD-binding FR-type domain. FAD-binding positions include 136 to 166 (DSLKVGDVVEFRGPSGLLTYTGKGHFNIQPN) and 175 to 210 (VAKKLGMIAGGTGITPMLQLIRAILKVPEDPTQCFL).

Belongs to the flavoprotein pyridine nucleotide cytochrome reductase family. It depends on FAD as a cofactor. Widely expressed.

It localises to the membrane. The enzyme catalyses 2 Fe(III)-[cytochrome b5] + NADH = 2 Fe(II)-[cytochrome b5] + NAD(+) + H(+). Its function is as follows. NADH-cytochrome b5 reductases are involved in desaturation and elongation of fatty acids, cholesterol biosynthesis, drug metabolism, and, in erythrocyte, methemoglobin reduction. The polypeptide is NADH-cytochrome b5 reductase 1 (CYB5R1) (Homo sapiens (Human)).